The sequence spans 501 residues: ATP synthase subunit alpha (501 aa).

ATP is bound at residue 169 to 176 (GDRQTGKT).

The protein belongs to the ATPase alpha/beta chains family. F-type ATPases have 2 components, CF(1) - the catalytic core - and CF(0) - the membrane proton channel. CF(1) has five subunits: alpha(3), beta(3), gamma(1), delta(1), epsilon(1). CF(0) has three main subunits: a(1), b(2) and c(9-12). The alpha and beta chains form an alternating ring which encloses part of the gamma chain. CF(1) is attached to CF(0) by a central stalk formed by the gamma and epsilon chains, while a peripheral stalk is formed by the delta and b chains.

It localises to the cell inner membrane. It carries out the reaction ATP + H2O + 4 H(+)(in) = ADP + phosphate + 5 H(+)(out). Functionally, produces ATP from ADP in the presence of a proton gradient across the membrane. The alpha chain is a regulatory subunit. This chain is ATP synthase subunit alpha, found in Campylobacter jejuni subsp. doylei (strain ATCC BAA-1458 / RM4099 / 269.97).